The primary structure comprises 125 residues: MPTKNQLIRHGREEKRRTDRTRALDQCPQKQGVCPRVSTRTPKKPNSAPRKIAKVRLSNRHDIFAHIPGEGHNSQEHSMVLIRGGRVKDSPGVKFHCIRGVKDLLGIPDRRRGRSKYGAEKPKSI.

A disordered region spans residues 1 to 51; that stretch reads MPTKNQLIRHGREEKRRTDRTRALDQCPQKQGVCPRVSTRTPKKPNSAPRK. Residues 10 to 23 show a composition bias toward basic and acidic residues; sequence HGREEKRRTDRTRA.

Belongs to the universal ribosomal protein uS12 family.

The protein resides in the mitochondrion. Functionally, protein S12 is involved in the translation initiation step. The sequence is that of Small ribosomal subunit protein uS12m (RPS12) from Nicotiana sylvestris (Wood tobacco).